The following is a 417-amino-acid chain: NADH-quinone oxidoreductase subunit D 1 (417 aa).

It belongs to the complex I 49 kDa subunit family. In terms of assembly, NDH-1 is composed of 14 different subunits. Subunits NuoB, C, D, E, F, and G constitute the peripheral sector of the complex.

It is found in the cell membrane. It catalyses the reaction a quinone + NADH + 5 H(+)(in) = a quinol + NAD(+) + 4 H(+)(out). Functionally, NDH-1 shuttles electrons from NADH, via FMN and iron-sulfur (Fe-S) centers, to quinones in the respiratory chain. The immediate electron acceptor for the enzyme in this species is believed to be ubiquinone. Couples the redox reaction to proton translocation (for every two electrons transferred, four hydrogen ions are translocated across the cytoplasmic membrane), and thus conserves the redox energy in a proton gradient. This Roseiflexus castenholzii (strain DSM 13941 / HLO8) protein is NADH-quinone oxidoreductase subunit D 1.